Consider the following 351-residue polypeptide: Uroporphyrinogen decarboxylase (351 aa).

Substrate contacts are provided by residues 27-31, Asp77, Tyr154, Thr209, and His327; that span reads RQAGR.

The protein belongs to the uroporphyrinogen decarboxylase family. As to quaternary structure, homodimer.

The protein resides in the cytoplasm. The catalysed reaction is uroporphyrinogen III + 4 H(+) = coproporphyrinogen III + 4 CO2. It participates in porphyrin-containing compound metabolism; protoporphyrin-IX biosynthesis; coproporphyrinogen-III from 5-aminolevulinate: step 4/4. Catalyzes the decarboxylation of four acetate groups of uroporphyrinogen-III to yield coproporphyrinogen-III. This Thioalkalivibrio sulfidiphilus (strain HL-EbGR7) protein is Uroporphyrinogen decarboxylase.